Consider the following 148-residue polypeptide: 3-dehydroquinate dehydratase (148 aa).

Tyrosine 23 serves as the catalytic Proton acceptor. The substrate site is built by asparagine 74, histidine 80, and aspartate 87. Histidine 100 acts as the Proton donor in catalysis. Substrate contacts are provided by residues 101–102 and arginine 111; that span reads IS.

It belongs to the type-II 3-dehydroquinase family. Homododecamer.

It carries out the reaction 3-dehydroquinate = 3-dehydroshikimate + H2O. It participates in metabolic intermediate biosynthesis; chorismate biosynthesis; chorismate from D-erythrose 4-phosphate and phosphoenolpyruvate: step 3/7. Catalyzes a trans-dehydration via an enolate intermediate. The chain is 3-dehydroquinate dehydratase from Thermoanaerobacter pseudethanolicus (strain ATCC 33223 / 39E) (Clostridium thermohydrosulfuricum).